Consider the following 549-residue polypeptide: Plant intracellular Ras-group-related LRR protein 4 (549 aa).

Low complexity predominate over residues 119–140 (SPSSNGSVSSRPPLPPATTTAA). The interval 119-167 (SPSSNGSVSSRPPLPPATTTAARSDSQSSLNFSERAPVRPKDMVSRDDS) is disordered. Positions 141 to 150 (RSDSQSSLNF) are enriched in polar residues. Over residues 154–167 (APVRPKDMVSRDDS) the composition is skewed to basic and acidic residues. Ser167 is modified (phosphoserine). 11 LRR repeats span residues 245–268 (LSSLTSLDLSENHIVVLPNTIGGL), 269–291 (SSLTKLDLHSNRIGQLPESIGEL), 293–313 (NLVYLNLGSNQLSSLPSAFSR), 314–337 (LVRLEELDLSCNNLPILPESIGSL), 339–360 (SLKKLDVETNDIEEIPYSIGGC), 362–383 (SLIELRADYNKLKALPEAIGKI), 384–406 (TTLEILSVRYNNIRQLPTTMSSL), 407–430 (ASLKELDVSFNELESVPESLCFAT), 432–454 (LVKLNIGNNFADMVSLPRSIGNL), 455–476 (EMLEELDISNNQIRVLPDSFKM), and 478–500 (TKLRVFRAQENPLHIPPRDIAEK). The GVYW; degenerate motif lies at 501-508 (GPQAVVQY).

Belongs to the SHOC2 family. In terms of tissue distribution, widely expressed.

Functionally, leucine-rich repeat protein that likely mediates protein interactions, possibly in the context of signal transduction. This Arabidopsis thaliana (Mouse-ear cress) protein is Plant intracellular Ras-group-related LRR protein 4 (PIRL4).